Consider the following 121-residue polypeptide: Small ribosomal subunit protein uS11 (121 aa).

The protein belongs to the universal ribosomal protein uS11 family. As to quaternary structure, part of the 30S ribosomal subunit. Interacts with proteins S7 and S18. Binds to IF-3.

Functionally, located on the platform of the 30S subunit, it bridges several disparate RNA helices of the 16S rRNA. Forms part of the Shine-Dalgarno cleft in the 70S ribosome. In Ureaplasma parvum serovar 3 (strain ATCC 27815 / 27 / NCTC 11736), this protein is Small ribosomal subunit protein uS11.